We begin with the raw amino-acid sequence, 632 residues long: tRNA uridine 5-carboxymethylaminomethyl modification enzyme MnmG (632 aa).

FAD contacts are provided by residues G15–G20, I127, and S182. G276–F290 contributes to the NAD(+) binding site. Q373 serves as a coordination point for FAD.

It belongs to the MnmG family. As to quaternary structure, homodimer. Heterotetramer of two MnmE and two MnmG subunits. It depends on FAD as a cofactor.

Its subcellular location is the cytoplasm. NAD-binding protein involved in the addition of a carboxymethylaminomethyl (cmnm) group at the wobble position (U34) of certain tRNAs, forming tRNA-cmnm(5)s(2)U34. The polypeptide is tRNA uridine 5-carboxymethylaminomethyl modification enzyme MnmG (Streptococcus pyogenes serotype M6 (strain ATCC BAA-946 / MGAS10394)).